A 700-amino-acid chain; its full sequence is Elongation factor G (700 aa).

Residues 8–290 (ERYRNIGISA…AVVEYLPSPV (283 aa)) enclose the tr-type G domain. Residues 17 to 24 (AHIDAGKT), 88 to 92 (DTPGH), and 142 to 145 (NKMD) each bind GTP.

Belongs to the TRAFAC class translation factor GTPase superfamily. Classic translation factor GTPase family. EF-G/EF-2 subfamily.

The protein resides in the cytoplasm. Catalyzes the GTP-dependent ribosomal translocation step during translation elongation. During this step, the ribosome changes from the pre-translocational (PRE) to the post-translocational (POST) state as the newly formed A-site-bound peptidyl-tRNA and P-site-bound deacylated tRNA move to the P and E sites, respectively. Catalyzes the coordinated movement of the two tRNA molecules, the mRNA and conformational changes in the ribosome. The sequence is that of Elongation factor G from Mannheimia succiniciproducens (strain KCTC 0769BP / MBEL55E).